A 358-amino-acid polypeptide reads, in one-letter code: Peptide chain release factor 1 (358 aa).

Glutamine 235 is modified (N5-methylglutamine).

Belongs to the prokaryotic/mitochondrial release factor family. Post-translationally, methylated by PrmC. Methylation increases the termination efficiency of RF1.

It localises to the cytoplasm. Functionally, peptide chain release factor 1 directs the termination of translation in response to the peptide chain termination codons UAG and UAA. The chain is Peptide chain release factor 1 from Brachyspira hyodysenteriae (strain ATCC 49526 / WA1).